Consider the following 328-residue polypeptide: Ribosomal RNA large subunit methyltransferase F (328 aa).

The disordered stretch occupies residues 1 to 31; sequence MTDTRKPPRKKPQRPAKPAAPREKATLHPRN.

This sequence belongs to the methyltransferase superfamily. METTL16/RlmF family.

It is found in the cytoplasm. The enzyme catalyses adenosine(1618) in 23S rRNA + S-adenosyl-L-methionine = N(6)-methyladenosine(1618) in 23S rRNA + S-adenosyl-L-homocysteine + H(+). Its function is as follows. Specifically methylates the adenine in position 1618 of 23S rRNA. This is Ribosomal RNA large subunit methyltransferase F from Pseudomonas syringae pv. syringae (strain B728a).